A 416-amino-acid chain; its full sequence is UBX domain-containing protein 4 (416 aa).

Residues 273-350 form the UBX domain; that stretch reads KAISECLLRV…EFGSKTMLLF (78 aa). A disordered region spans residues 376–402; that stretch reads TRTTPSVNTINKSNPQGPSDNATSIKK. A compositionally biased stretch (polar residues) spans 378-402; the sequence is TTPSVNTINKSNPQGPSDNATSIKK.

The protein localises to the nucleus. It is found in the cytoplasm. Functionally, involved in CDC48-dependent protein degradation through the ubiquitin/proteasome pathway. The protein is UBX domain-containing protein 4 (UBX4) of Saccharomyces cerevisiae (strain ATCC 204508 / S288c) (Baker's yeast).